Here is a 258-residue protein sequence, read N- to C-terminus: MASSSAAMSLESISMTTLNNLSRNHQSHRSSLLGFSRSFQNLGISSNGPDFSSRSRSTTSKNLNVTRAFFWNWGKKTENSRPSKIQELNVYELNEGDRNSPAVLKLGKKPTELCLGDLVPFTNKLYTGDLKKRVGITAGLCVLIQHVPEKSGDRFEASYSFYFGDYGHLSVQGQYLTYEDTFLAVTGGSGIFEGAYGQVKLRQLVYPTKLFYTFYLKGLANDLPLELTGTAVTPSKDVKPAPEAKAMEPSGVISNFTN.

A chloroplast-targeting transit peptide spans 1 to 56; the sequence is MASSSAAMSLESISMTTLNNLSRNHQSHRSSLLGFSRSFQNLGISSNGPDFSSRSR.

The protein belongs to the allene oxide cyclase family. Highly expressed in fully developed leaves.

The protein localises to the plastid. It is found in the chloroplast. It carries out the reaction (9Z,13S,15Z)-12,13-epoxyoctadeca-9,11,15-trienoate = (9S,13S,15Z)-12-oxophyto-10,15-dienoate. Its function is as follows. Involved in the production of 12-oxo-phytodienoic acid (OPDA), a precursor of jasmonic acid. The polypeptide is Allene oxide cyclase 3, chloroplastic (AOC3) (Arabidopsis thaliana (Mouse-ear cress)).